Reading from the N-terminus, the 627-residue chain is BURP domain-containing protein 12 (627 aa).

The signal sequence occupies residues 1 to 25; it reads MASPPHLPLLLLLLVVVCNAAGGDG. Residues Asn119, Asn175, Asn251, Asn366, Asn384, and Asn530 are each glycosylated (N-linked (GlcNAc...) asparagine). The 212-residue stretch at 415 to 626 folds into the BURP domain; it reads FFRETELVSG…FEGDMTWTVA (212 aa).

As to expression, expressed in stems, leaves, shoot and panicles.

The polypeptide is BURP domain-containing protein 12 (BURP12) (Oryza sativa subsp. japonica (Rice)).